Consider the following 204-residue polypeptide: Large ribosomal subunit protein uL4 (204 aa).

The tract at residues 53 to 77 (ISDVSGTTAKPYSQKRTGRARQGSL) is disordered. Residues 56–67 (VSGTTAKPYSQK) show a composition bias toward polar residues.

The protein belongs to the universal ribosomal protein uL4 family. In terms of assembly, part of the 50S ribosomal subunit.

Its function is as follows. One of the primary rRNA binding proteins, this protein initially binds near the 5'-end of the 23S rRNA. It is important during the early stages of 50S assembly. It makes multiple contacts with different domains of the 23S rRNA in the assembled 50S subunit and ribosome. Forms part of the polypeptide exit tunnel. This is Large ribosomal subunit protein uL4 from Wolbachia sp. subsp. Brugia malayi (strain TRS).